The sequence spans 344 residues: L-threonine 3-dehydrogenase (344 aa).

Zn(2+) is bound at residue Cys-42. Residues Thr-44 and His-47 each act as charge relay system in the active site. Zn(2+)-binding residues include His-67, Glu-68, Cys-97, Cys-100, Cys-103, and Cys-111. NAD(+) contacts are provided by residues Ile-179, Asp-199, Arg-204, 266–268, and 290–291; these read LGI and IY.

Belongs to the zinc-containing alcohol dehydrogenase family. In terms of assembly, homotetramer. Zn(2+) is required as a cofactor.

The protein localises to the cytoplasm. The enzyme catalyses L-threonine + NAD(+) = (2S)-2-amino-3-oxobutanoate + NADH + H(+). It functions in the pathway amino-acid degradation; L-threonine degradation via oxydo-reductase pathway; glycine from L-threonine: step 1/2. Its function is as follows. Catalyzes the NAD(+)-dependent oxidation of L-threonine to 2-amino-3-ketobutyrate. This Sinorhizobium medicae (strain WSM419) (Ensifer medicae) protein is L-threonine 3-dehydrogenase.